We begin with the raw amino-acid sequence, 159 residues long: Probable cyclic pyranopterin monophosphate synthase accessory protein (159 aa).

Asp128 is a catalytic residue.

The protein belongs to the MoaC family.

The protein operates within cofactor biosynthesis; molybdopterin biosynthesis. Functionally, together with MoaA, is involved in the conversion of 5'-GTP to cyclic pyranopterin monophosphate (cPMP or molybdopterin precursor Z). In Methanothermobacter thermautotrophicus (strain ATCC 29096 / DSM 1053 / JCM 10044 / NBRC 100330 / Delta H) (Methanobacterium thermoautotrophicum), this protein is Probable cyclic pyranopterin monophosphate synthase accessory protein.